The primary structure comprises 262 residues: Ribosomal RNA small subunit methyltransferase A (262 aa).

Ile18, Gly43, Glu65, Asp91, and Asn110 together coordinate S-adenosyl-L-methionine.

The protein belongs to the class I-like SAM-binding methyltransferase superfamily. rRNA adenine N(6)-methyltransferase family. RsmA subfamily.

The protein resides in the cytoplasm. The catalysed reaction is adenosine(1518)/adenosine(1519) in 16S rRNA + 4 S-adenosyl-L-methionine = N(6)-dimethyladenosine(1518)/N(6)-dimethyladenosine(1519) in 16S rRNA + 4 S-adenosyl-L-homocysteine + 4 H(+). Functionally, specifically dimethylates two adjacent adenosines (A1518 and A1519) in the loop of a conserved hairpin near the 3'-end of 16S rRNA in the 30S particle. May play a critical role in biogenesis of 30S subunits. The polypeptide is Ribosomal RNA small subunit methyltransferase A (Ehrlichia canis (strain Jake)).